Reading from the N-terminus, the 502-residue chain is Glycerol kinase (502 aa).

Position 14 (Thr-14) interacts with ADP. Residues Thr-14 and Thr-15 each coordinate ATP. Thr-14 provides a ligand contact to sn-glycerol 3-phosphate. ADP is bound at residue Arg-18. Sn-glycerol 3-phosphate contacts are provided by Arg-84, Glu-85, Tyr-136, and Asp-245. Residues Arg-84, Glu-85, Tyr-136, Asp-245, and Gln-246 each coordinate glycerol. ADP-binding residues include Thr-267 and Gly-314. ATP-binding residues include Thr-267, Gly-314, Gln-318, and Gly-415. 2 residues coordinate ADP: Gly-415 and Asn-419.

Belongs to the FGGY kinase family.

It carries out the reaction glycerol + ATP = sn-glycerol 3-phosphate + ADP + H(+). Its pathway is polyol metabolism; glycerol degradation via glycerol kinase pathway; sn-glycerol 3-phosphate from glycerol: step 1/1. Inhibited by fructose 1,6-bisphosphate (FBP). Key enzyme in the regulation of glycerol uptake and metabolism. Catalyzes the phosphorylation of glycerol to yield sn-glycerol 3-phosphate. This is Glycerol kinase from Acaryochloris marina (strain MBIC 11017).